The following is a 571-amino-acid chain: Hemagglutinin-neuraminidase (571 aa).

Residues 1–25 lie on the Intravirion side of the membrane; sequence MEDYSNLSLKSIPKRTCRIIFRTAT. A helical membrane pass occupies residues 26-46; it reads ILGICTLIVLCSSILHEIIHL. Residues 47 to 571 lie on the Virion surface side of the membrane; that stretch reads DVSSGLMDSD…IIPFLRELIP (525 aa). 3 disulfides stabilise this stretch: Cys166-Cys190, Cys180-Cys241, and Cys232-Cys245. The segment at 228-233 is involved in neuraminidase activity; the sequence is NRKSCS. N-linked (GlcNAc...) asparagine; by host glycans are attached at residues Asn272, Asn284, and Asn335. Disulfide bonds link Cys338-Cys459, Cys370-Cys380, and Cys453-Cys463. N-linked (GlcNAc...) asparagine; by host glycosylation is found at Asn386, Asn454, Asn498, Asn501, Asn517, and Asn522. Cys535 and Cys546 form a disulfide bridge.

This sequence belongs to the paramyxoviruses hemagglutinin-neuraminidase family. In terms of assembly, homotetramer; composed of disulfide-linked homodimers. Interacts with F protein trimer.

The protein localises to the virion membrane. It is found in the host cell membrane. The catalysed reaction is Hydrolysis of alpha-(2-&gt;3)-, alpha-(2-&gt;6)-, alpha-(2-&gt;8)- glycosidic linkages of terminal sialic acid residues in oligosaccharides, glycoproteins, glycolipids, colominic acid and synthetic substrates.. In terms of biological role, attaches the virus to sialic acid-containing cell receptors and thereby initiating infection. Binding of HN protein to the receptor induces a conformational change that allows the F protein to trigger virion/cell membranes fusion. Neuraminidase activity ensures the efficient spread of the virus by dissociating the mature virions from the neuraminic acid containing glycoproteins. The chain is Hemagglutinin-neuraminidase (HN) from Homo sapiens (Human).